We begin with the raw amino-acid sequence, 298 residues long: Acetylglutamate kinase (298 aa).

Substrate-binding positions include 69–70 (GG), R91, and N196.

The protein belongs to the acetylglutamate kinase family. ArgB subfamily.

Its subcellular location is the cytoplasm. It catalyses the reaction N-acetyl-L-glutamate + ATP = N-acetyl-L-glutamyl 5-phosphate + ADP. It participates in amino-acid biosynthesis; L-arginine biosynthesis; N(2)-acetyl-L-ornithine from L-glutamate: step 2/4. Functionally, catalyzes the ATP-dependent phosphorylation of N-acetyl-L-glutamate. In Rhodopseudomonas palustris (strain ATCC BAA-98 / CGA009), this protein is Acetylglutamate kinase.